Here is a 207-residue protein sequence, read N- to C-terminus: Protein YABBY 6 (207 aa).

The C4-type zinc-finger motif lies at 16 to 43; that stretch reads CNFCNTILAVSVPGNSMLNIVTVRCGHC.

This sequence belongs to the YABBY family. In terms of tissue distribution, expressed in leaf blades, leaf sheaths and flowers.

The protein resides in the nucleus. The chain is Protein YABBY 6 (YAB6) from Oryza sativa subsp. japonica (Rice).